The primary structure comprises 202 residues: Small ribosomal subunit protein uS4 (202 aa).

Residues 91-168 (SMLSSVLYNS…QKVPDYLEVD (78 aa)) enclose the S4 RNA-binding domain.

This sequence belongs to the universal ribosomal protein uS4 family. As to quaternary structure, part of the 30S ribosomal subunit. Contacts protein S5. The interaction surface between S4 and S5 is involved in control of translational fidelity.

One of the primary rRNA binding proteins, it binds directly to 16S rRNA where it nucleates assembly of the body of the 30S subunit. Functionally, with S5 and S12 plays an important role in translational accuracy. This is Small ribosomal subunit protein uS4 from Ehrlichia ruminantium (strain Welgevonden).